A 616-amino-acid polypeptide reads, in one-letter code: MNISRSSGLMRQFLLQPLRKGCDISCLGRSSWRMSRSFSGSSVLNEINLSRTKNLFLNDCKFNKNSFEKFFARRLSNSVAPTPGGILQETEKIPSKKVAFWLLGSSALVLAIVVVGGITRLTESGLSITEWKPITGVIPPLTDEQWNQEFELYKKSPEFEKLNSHMTVDEFKNIFFWEWFHRVLGRGIGLTILLPSIYMIVTKRASPWLSKRLIGLTGLVGLQGVIGWWMVKSGLSEELFSDGSHPRVSHYRLATHLAAAVALYIGLVWTGHGILQRHAFLKSMKSGSTSQLTSMVSSVQKMKGFRTSVNSFVGLVLITLLSGAFVAGLDAGMIYCTFPEMGEGRLAPSKSELFDQRFCRKDDKSDLIWRNMIDNPSLVQLEHRILAITTFVAACGLFIFSRAKRNILPKKIKTSINVVTGVVTAQATLGIMTLIYVVPVPLAALHQAGSLVTLTAALSLAQRLHPEYALKNIRSWTKLISSPPKSSISSSILTQQRQFHTFRPSFHSEIKKPLPGTGIKVFFVTPEGREIMIEGNEEGACEGSVACSTCHVIVDPEHYELLDPPEEDEEDMLDLAFGLEETSRLGCQVLLRKDLDGIRVRIPAQTRNIRLERPKA.

A mitochondrion-targeting transit peptide spans 1 to 45 (MNISRSSGLMRQFLLQPLRKGCDISCLGRSSWRMSRSFSGSSVLN). The tract at residues 45-465 (NEINLSRTKN…AALSLAQRLH (421 aa)) is heme a synthase cox15-like. The Mitochondrial matrix segment spans residues 46 to 97 (EINLSRTKNLFLNDCKFNKNSFEKFFARRLSNSVAPTPGGILQETEKIPSKK). A helical membrane pass occupies residues 98-118 (VAFWLLGSSALVLAIVVVGGI). Residues 119–182 (TRLTESGLSI…NIFFWEWFHR (64 aa)) lie on the Mitochondrial intermembrane side of the membrane. Position 181 (His181) interacts with heme o. The helical transmembrane segment at 183 to 203 (VLGRGIGLTILLPSIYMIVTK) threads the bilayer. The Mitochondrial matrix segment spans residues 204–212 (RASPWLSKR). Residues 213–233 (LIGLTGLVGLQGVIGWWMVKS) traverse the membrane as a helical segment. At 234 to 254 (GLSEELFSDGSHPRVSHYRLA) the chain is on the mitochondrial intermembrane side. A helical transmembrane segment spans residues 255–275 (THLAAAVALYIGLVWTGHGIL). A heme o-binding site is contributed by His256. Residues 276–311 (QRHAFLKSMKSGSTSQLTSMVSSVQKMKGFRTSVNS) are Mitochondrial matrix-facing. A helical membrane pass occupies residues 312-332 (FVGLVLITLLSGAFVAGLDAG). The Mitochondrial intermembrane portion of the chain corresponds to 333 to 380 (MIYCTFPEMGEGRLAPSKSELFDQRFCRKDDKSDLIWRNMIDNPSLVQ). A helical transmembrane segment spans residues 381–401 (LEHRILAITTFVAACGLFIFS). His383 lines the heme b pocket. At 402 to 417 (RAKRNILPKKIKTSIN) the chain is on the mitochondrial matrix side. Residues 418-438 (VVTGVVTAQATLGIMTLIYVV) traverse the membrane as a helical segment. Pro439 is a topological domain (mitochondrial intermembrane). The chain crosses the membrane as a helical span at residues 440–460 (VPLAALHQAGSLVTLTAALSL). His446 lines the heme b pocket. Residues 461–616 (AQRLHPEYAL…RNIRLERPKA (156 aa)) are Mitochondrial matrix-facing. The 105-residue stretch at 502 to 606 (FRPSFHSEIK…GIRVRIPAQT (105 aa)) folds into the 2Fe-2S ferredoxin-type domain. The segment at 516-616 (GTGIKVFFVT…RNIRLERPKA (101 aa)) is mitochondrial ferredoxin yah1-like. Residues Cys541, Cys547, Cys550, and Cys587 each contribute to the [2Fe-2S] cluster site.

In the N-terminal section; belongs to the COX15/CtaA family. Type 2 subfamily. The protein in the C-terminal section; belongs to the adrenodoxin/putidaredoxin family. In terms of assembly, homodimer. It depends on heme b as a cofactor. [2Fe-2S] cluster is required as a cofactor. The etp1 preprotein is cleaved into 2 chains after imort into mitochondria. The N-terminal chain containing a heme A synthase cox15-like domain etp1(cd) is a subunit of the membrane-embedded cytochrome c oxidase complex and functions in the respiratory chain. The C-terminal chain containing a ferredoxin yah1-like domain etp1(fd) is released and serves in the matrix as electron transfer protein.

The protein localises to the mitochondrion inner membrane. The protein resides in the mitochondrion matrix. The enzyme catalyses Fe(II)-heme o + 2 A + H2O = Fe(II)-heme a + 2 AH2. It functions in the pathway porphyrin-containing compound metabolism; heme A biosynthesis; heme A from heme O: step 1/1. Functionally, catalyzes the second reaction in the biosynthesis of heme A, a prosthetic group of mitochondrial cytochrome c oxidase (CcO). Heme A is synthesized from heme B by two sequential enzymatic reactions catalyzed by heme O synthase (HOS) and heme A synthase (HAS). HAS catalyzes the conversion of heme O to heme A by two successive hydroxylations of the methyl group at C8, in a reaction that involves matrix ferredoxin and ferredoxin reductase. The first hydroxylation forms heme I, the second hydroxylation results in an unstable dihydroxymethyl group, which spontaneously dehydrates, resulting in the formyl group of heme A. Its function is as follows. Iron-sulfur protein that transfers electrons in a wide variety of metabolic reactions. Involved in heme A biosynthesis and in iron-sulfur cluster assembly. Transfers electrons from adrenodoxin reductase arh1 to heme A synthase etp1(cd), a heme protein that catalyzes the conversion of heme O to heme A. Required for the de novo synthesis of Fe-S clusters on iron sulfur cluster assembly protein isu1. Interact in its reduced state with isu1 to productively deliver electrons for Fe-S cluster synthesis. Essential for coenzyme Q biosynthesis. May transfer the electrons required for the hydroxylation reaction performed by coq6. This is Heme A synthase-mitochondrial ferredoxin fusion protein from Schizosaccharomyces pombe (strain 972 / ATCC 24843) (Fission yeast).